A 709-amino-acid chain; its full sequence is Elongation factor G (709 aa).

The 287-residue stretch at 9–295 (AKVRNIGIMA…AVVRYLPTPL (287 aa)) folds into the tr-type G domain. GTP contacts are provided by residues 18–25 (AHIDAGKT), 86–90 (DTPGH), and 140–143 (NKLD).

This sequence belongs to the TRAFAC class translation factor GTPase superfamily. Classic translation factor GTPase family. EF-G/EF-2 subfamily.

The protein localises to the cytoplasm. Functionally, catalyzes the GTP-dependent ribosomal translocation step during translation elongation. During this step, the ribosome changes from the pre-translocational (PRE) to the post-translocational (POST) state as the newly formed A-site-bound peptidyl-tRNA and P-site-bound deacylated tRNA move to the P and E sites, respectively. Catalyzes the coordinated movement of the two tRNA molecules, the mRNA and conformational changes in the ribosome. In Streptomyces avermitilis (strain ATCC 31267 / DSM 46492 / JCM 5070 / NBRC 14893 / NCIMB 12804 / NRRL 8165 / MA-4680), this protein is Elongation factor G.